The sequence spans 171 residues: UPF0763 protein KHP_0657 (171 aa).

Belongs to the UPF0763 family.

This chain is UPF0763 protein KHP_0657, found in Helicobacter pylori (strain 51).